A 262-amino-acid chain; its full sequence is 3-deoxy-manno-octulosonate cytidylyltransferase (262 aa).

It belongs to the KdsB family.

The protein resides in the cytoplasm. The enzyme catalyses 3-deoxy-alpha-D-manno-oct-2-ulosonate + CTP = CMP-3-deoxy-beta-D-manno-octulosonate + diphosphate. The protein operates within nucleotide-sugar biosynthesis; CMP-3-deoxy-D-manno-octulosonate biosynthesis; CMP-3-deoxy-D-manno-octulosonate from 3-deoxy-D-manno-octulosonate and CTP: step 1/1. It participates in bacterial outer membrane biogenesis; lipopolysaccharide biosynthesis. Functionally, activates KDO (a required 8-carbon sugar) for incorporation into bacterial lipopolysaccharide in Gram-negative bacteria. The protein is 3-deoxy-manno-octulosonate cytidylyltransferase of Koribacter versatilis (strain Ellin345).